A 622-amino-acid polypeptide reads, in one-letter code: Auxin efflux carrier component 1 (622 aa).

Over 1–6 the chain is Extracellular; sequence MITAAD. The helical transmembrane segment at 7 to 27 threads the bilayer; that stretch reads FYHVMTAMVPLYVAMILAYGS. At 28–44 the chain is on the cytoplasmic side; sequence VKWWKIFTPDQCSGINR. A helical membrane pass occupies residues 45 to 65; sequence FVALFAVPLLSFHFIAANNPY. Valine 51 is a (indol-3-yl)acetate binding site. Over 66–70 the chain is Extracellular; it reads AMNLR. The chain crosses the membrane as a helical span at residues 71 to 91; that stretch reads FLAADSLQKVIVLSLLFLWCK. The Cytoplasmic segment spans residues 92 to 100; it reads LSRNGSLDW. Residues 101-121 form a helical membrane-spanning segment; sequence TITLFSLSTLPNTLVMGIPLL. Positions 112 and 114 each coordinate (indol-3-yl)acetate. At 122 to 131 the chain is on the extracellular side; that stretch reads KGMYGNFSGD. Asparagine 127 is a glycosylation site (N-linked (GlcNAc...) asparagine). Residues 132 to 152 form a helical membrane-spanning segment; that stretch reads LMVQIVVLQCIIWYTLMLFLF. Residue tyrosine 145 coordinates (indol-3-yl)acetate. The Cytoplasmic portion of the chain corresponds to 153 to 482; that stretch reads EYRGAKLLIS…LIRNPNSYSS (330 aa). Serine 209, serine 212, serine 221, and serine 225 each carry phosphoserine. The tract at residues 213-233 is disordered; that stretch reads RSDIYSRRSQGLSATPRPSNL. Threonine 227 is subject to Phosphothreonine. Residue serine 231 is modified to Phosphoserine. Threonine 248 is modified (phosphothreonine). Phosphoserine occurs at positions 252, 253, and 271. The interval 268 to 362 is disordered; sequence GRNSNFGPGE…PVVGGKRQDG (95 aa). Threonine 286 bears the Phosphothreonine mark. Position 290 is a phosphoserine (serine 290). Residues 298-311 show a composition bias toward low complexity; sequence PAKPTAAGTAAGAG. Threonine 302 bears the Phosphothreonine mark. Phosphoserine occurs at positions 317, 320, and 337. The residue at position 340 (threonine 340) is a Phosphothreonine. Phosphoserine is present on residues serine 374, serine 377, serine 408, serine 414, serine 426, serine 434, and serine 446. A helical membrane pass occupies residues 483 to 503; that stretch reads LFGITWSLISFKWNIEMPALI. Residues 504-506 are Extracellular-facing; the sequence is AKS. Residues 507–527 form a helical membrane-spanning segment; that stretch reads ISILSDAGLGMAMFSLGLFMA. The Cytoplasmic portion of the chain corresponds to 528–541; it reads LNPRIIACGNRRAA. The chain crosses the membrane as a helical span at residues 542 to 562; that stretch reads FAAAMRFVVGPAVMLVASYAV. The Extracellular portion of the chain corresponds to 563-566; sequence GLRG. A helical membrane pass occupies residues 567–587; sequence VLLHVAIIQAALPQGIVPFVF. Positions 582 and 583 each coordinate (indol-3-yl)acetate. The Cytoplasmic segment spans residues 588 to 601; the sequence is AKEYNVHPDILSTA. The helical transmembrane segment at 602-622 threads the bilayer; it reads VIFGMLIALPITLLYYILLGL.

Belongs to the auxin efflux carrier (TC 2.A.69.1) family. Homodimer. Interacts with TOPP4. Interacts with FYPP1 and FYPP3. Component of a complex made of PINs (e.g. PIN1 and PIN2), MAB4/MELs (e.g. NPY1/MAB4 and NPY5/MEL1) and AGC kinases (e.g. D6PK and PID) at the plasma membrane. Binds directly to NPY5/MEL1. In terms of tissue distribution, expressed at the basal side of elongated parenchymatous xylem cells.

Its subcellular location is the cell membrane. Its activity is regulated as follows. Auxin efflux carrier activity is competitively inhibited by naptalamate (N-1-naphthylphthalamic acid, NPA) but activated by D6PK-mediated phosphorylation. Acts as a component of the auxin efflux carrier; this activity is enhanced when activated by D6PK-mediated phosphorylation. Binds auxins including indole-3-acetic acid (IAA), indole-3-butyric acid (IBA), indole-3-propionic acid (IPA) and 4-chloroindole-3-acetic acid (4-Cl-IAA). Seems to be involved in the basipetal auxin transport. Mediates the formation of auxin gradient which is required to ensure correct organogenesis. Coordinated polar localization of PIN1 is directly regulated by the vesicle trafficking process and apical-basal PIN1 polarity also depends on the phosphorylation of conserved serine residues by PID kinase. The ARF-GEF protein GNOM is required for the correct recycling of PIN1 between the plasma membrane and endosomal compartments. Recrutes NPY proteins (e.g. NPY1/MAB4 and NPY5/MEL1) to the plasma membrane in a polar basal localization in root epidermis; this activity is optimized by AGC kinases-mediated (e.g. D6PK and PID) phosphorylation that limits their lateral diffusion-based escape. In Arabidopsis thaliana (Mouse-ear cress), this protein is Auxin efflux carrier component 1.